A 52-amino-acid polypeptide reads, in one-letter code: Conotoxin Cal6.25 (52 aa).

Residues 1 to 22 (MKLTHVLIVAVLVLTVCHLTMA) form the signal peptide. Disulfide bonds link cysteine 24–cysteine 41, cysteine 31–cysteine 45, and cysteine 40–cysteine 50.

As to expression, expressed by the venom duct.

The protein localises to the secreted. Probable neurotoxin. The sequence is that of Conotoxin Cal6.25 from Californiconus californicus (California cone).